A 181-amino-acid polypeptide reads, in one-letter code: Large ribosomal subunit protein uL10 (181 aa).

It belongs to the universal ribosomal protein uL10 family. Part of the ribosomal stalk of the 50S ribosomal subunit. The N-terminus interacts with L11 and the large rRNA to form the base of the stalk. The C-terminus forms an elongated spine to which L12 dimers bind in a sequential fashion forming a multimeric L10(L12)X complex.

Functionally, forms part of the ribosomal stalk, playing a central role in the interaction of the ribosome with GTP-bound translation factors. This Trichormus variabilis (strain ATCC 29413 / PCC 7937) (Anabaena variabilis) protein is Large ribosomal subunit protein uL10.